The following is a 332-amino-acid chain: UPF0158 protein TC_0713 (332 aa).

Disordered regions lie at residues 196 to 215 (ALNP…KVEA) and 291 to 332 (LGYD…KARS). The span at 295 to 316 (GDGDASDFFGEEYDDDDDDDDD) shows a compositional bias: acidic residues. The span at 320–332 (KKAAKRGRKKARS) shows a compositional bias: basic residues.

Belongs to the UPF0158 family.

In Chlamydia muridarum (strain MoPn / Nigg), this protein is UPF0158 protein TC_0713.